Reading from the N-terminus, the 432-residue chain is uncharacterized protein (432 aa).

The next 12 helical transmembrane spans lie at 35-55 (VARV…VIYL), 60-80 (LPPA…IATG), 112-132 (VAGM…PLWS), 144-164 (VGLL…LGAL), 185-205 (LAVA…LWAA), 209-229 (AVAW…ASLL), 242-262 (AHSI…PVLL), 274-294 (GAVI…LSAM), 313-333 (LIAP…AAGL), 359-379 (AAAV…AAAL), 384-404 (LLGW…PMPL), and 408-428 (TVIA…AALA).

To M.tuberculosis Rv3630 and M.bovis Mb3654.

The protein resides in the cell membrane. This is an uncharacterized protein from Mycobacterium tuberculosis (strain CDC 1551 / Oshkosh).